Consider the following 141-residue polypeptide: Hemoglobin subunit alpha-D (141 aa).

The Globin domain maps to 1–141 (MLSADDKKII…VAAVLAEKYR (141 aa)). His58 and His87 together coordinate heme b.

The protein belongs to the globin family. In terms of assembly, heterotetramer of two alpha-D chains and two beta chains. In terms of tissue distribution, red blood cells.

In terms of biological role, involved in oxygen transport from the lung to the various peripheral tissues. The chain is Hemoglobin subunit alpha-D (HBAD) from Anser indicus (Bar-headed goose).